A 494-amino-acid polypeptide reads, in one-letter code: UPF0371 protein stu1377 (494 aa).

Belongs to the UPF0371 family.

The protein is UPF0371 protein stu1377 of Streptococcus thermophilus (strain ATCC BAA-250 / LMG 18311).